The sequence spans 469 residues: Coiled-coil domain-containing protein 6 (469 aa).

Acidic residues predominate over residues 1 to 10 (MADSASESDT). Residues 1–37 (MADSASESDTDAAGGGPAAMQSSCSATSGGSGGGGGG) are disordered. The residue at position 2 (A2) is an N-acetylalanine. S45 bears the Phosphoserine mark. Residues 47–320 (FRLEELTNRL…LCRQLSESES (274 aa)) are a coiled coil. 3 repeat units span residues 99–127 (EQEEEFISNTLFKKIQALQKEKETLAVNY), 128–156 (EKEEEFLTNELSRKLMQLQHEKAELEQHL), and 157–185 (EQEQEFQVNKLMKKIKKLENDTISKQLTL). Residues 99 to 228 (EQEEEFISNT…AEKRILQEKL (130 aa)) form a 5 X 29 AA tandem repeats region. The stretch at 186–199 (EQLRREKIDLENTL) is one 4; approximate repeat. Copy 5 of the repeat occupies 200-228 (EQEQEALVNRLWKRMDKLEAEKRILQEKL). Phosphoserine is present on residues S233, S237, S242, S247, S277, and S316. Residues 335–362 (AQGLRPRTVSSPIPYTPSPSSSRPISPG) form a disordered region. T342 carries the post-translational modification Phosphothreonine. Positions 344 to 361 (SSPIPYTPSPSSSRPISP) are enriched in low complexity. S356 and S360 each carry phosphoserine. Position 380 is an omega-N-methylarginine (R380). 2 positions are modified to phosphoserine: S388 and S406. Residues 394 to 469 (QHMGASHGIT…QHPVHPSSQP (76 aa)) form a disordered region. The segment covering 419-444 (PTPPPSPNTQSPVQPPPPPPPPPMQP) has biased composition (pro residues). The short motif at 435 to 444 (PPPPPPPMQP) is the SH3-binding element. The segment covering 460 to 469 (QHPVHPSSQP) has biased composition (low complexity).

It localises to the cytoplasm. Its subcellular location is the cytoskeleton. The protein is Coiled-coil domain-containing protein 6 (Ccdc6) of Mus musculus (Mouse).